The sequence spans 194 residues: Potassium-transporting ATPase KdpC subunit (194 aa).

A helical membrane pass occupies residues 12–34; it reads LFLLLLTGGVYPLLTTALGQWWF.

Belongs to the KdpC family. In terms of assembly, the system is composed of three essential subunits: KdpA, KdpB and KdpC.

Its subcellular location is the cell inner membrane. Functionally, part of the high-affinity ATP-driven potassium transport (or Kdp) system, which catalyzes the hydrolysis of ATP coupled with the electrogenic transport of potassium into the cytoplasm. This subunit acts as a catalytic chaperone that increases the ATP-binding affinity of the ATP-hydrolyzing subunit KdpB by the formation of a transient KdpB/KdpC/ATP ternary complex. The chain is Potassium-transporting ATPase KdpC subunit from Salmonella enteritidis PT4 (strain P125109).